Consider the following 164-residue polypeptide: Cyclic pyranopterin monophosphate synthase (164 aa).

Substrate contacts are provided by residues 77–79 (LCH) and 115–116 (ME). Asp130 is a catalytic residue.

This sequence belongs to the MoaC family. In terms of assembly, homohexamer; trimer of dimers.

It carries out the reaction (8S)-3',8-cyclo-7,8-dihydroguanosine 5'-triphosphate = cyclic pyranopterin phosphate + diphosphate. The protein operates within cofactor biosynthesis; molybdopterin biosynthesis. Catalyzes the conversion of (8S)-3',8-cyclo-7,8-dihydroguanosine 5'-triphosphate to cyclic pyranopterin monophosphate (cPMP). The sequence is that of Cyclic pyranopterin monophosphate synthase from Rhizobium meliloti (strain 1021) (Ensifer meliloti).